The following is a 258-amino-acid chain: Large ribosomal subunit protein bL21 (258 aa).

Residues 140–159 (KAKDAKDEAPKAAPKAEKKK) show a composition bias toward basic and acidic residues. The tract at residues 140–181 (KAKDAKDEAPKAAPKAEKKKAAPKKAKAEAAPAAADEGTRPA) is disordered.

The protein belongs to the bacterial ribosomal protein bL21 family. As to quaternary structure, part of the 50S ribosomal subunit. Contacts protein L20.

This protein binds to 23S rRNA in the presence of protein L20. This Jannaschia sp. (strain CCS1) protein is Large ribosomal subunit protein bL21.